Consider the following 347-residue polypeptide: Ribosomal RNA large subunit methyltransferase M (347 aa).

Residues serine 184, 217–220 (APGG), aspartate 236, aspartate 256, and aspartate 272 contribute to the S-adenosyl-L-methionine site. Lysine 301 serves as the catalytic Proton acceptor.

This sequence belongs to the class I-like SAM-binding methyltransferase superfamily. RNA methyltransferase RlmE family. RlmM subfamily. In terms of assembly, monomer.

It localises to the cytoplasm. The enzyme catalyses cytidine(2498) in 23S rRNA + S-adenosyl-L-methionine = 2'-O-methylcytidine(2498) in 23S rRNA + S-adenosyl-L-homocysteine + H(+). Functionally, catalyzes the 2'-O-methylation at nucleotide C2498 in 23S rRNA. The sequence is that of Ribosomal RNA large subunit methyltransferase M from Xanthomonas euvesicatoria pv. vesicatoria (strain 85-10) (Xanthomonas campestris pv. vesicatoria).